Here is a 534-residue protein sequence, read N- to C-terminus: Inorganic phosphate transporter 1-6 (534 aa).

At 1–29 the chain is on the cytoplasmic side; the sequence is MGGGGGEQQQLEVLHALDVAKTQWYHFTA. The chain crosses the membrane as a helical span at residues 30–50; the sequence is IVVAGMGFFTDAYDLFCISLV. Over 51–75 the chain is Extracellular; sequence TKLLGRIYYRVDGSPSPGTLPPHVS. A helical transmembrane segment spans residues 76–96; sequence ASVNGVAFVGTLSGQLFFGWL. Over 97–104 the chain is Cytoplasmic; that stretch reads GDKLGRKR. A helical membrane pass occupies residues 105-125; that stretch reads VYGITLMLMVLCSLASALSFG. The Extracellular segment spans residues 126–127; it reads HT. The helical transmembrane segment at 128-148 threads the bilayer; that stretch reads PTSVMATLCFFRFWLGFGIGG. Topologically, residues 149 to 168 are cytoplasmic; the sequence is DYPLSATIMSEYANKKTRGA. Residues 169–189 form a helical membrane-spanning segment; sequence FIAAVFAMQGFGIITGGLVAI. Topologically, residues 190–216 are extracellular; the sequence is LVSASFRAAFPAPPYGEDPVASTPPQA. A helical membrane pass occupies residues 217–237; that stretch reads DFVWRIILMLGALPAALTYYW. At 238-294 the chain is on the cytoplasmic side; that stretch reads RTKMPETARYTALVANNAKQAAADMSKVLQVVEMRNIGNNGGSRRPFGLFSGEFVRR. A helical transmembrane segment spans residues 295–315; sequence HGLHLVGTSATWLLLDIAFYS. Over 316 to 350 the chain is Extracellular; sequence QNLFQKDIFSAVGWIPKAATMSALEELFRIARAQT. A helical membrane pass occupies residues 351-371; that stretch reads LIALCGTVPGYWFTVALIDVV. Residues 372–375 lie on the Cytoplasmic side of the membrane; the sequence is GRFK. A helical transmembrane segment spans residues 376-396; the sequence is IQAVGFFMMTLFMLTLALPYH. The Extracellular portion of the chain corresponds to 397 to 405; the sequence is HWTAPGKNH. Residues 406–426 form a helical membrane-spanning segment; sequence VGFLLLYGLTFFFANFGPNST. At 427–445 the chain is on the cytoplasmic side; sequence TFIVPAEIFPARLRATCHG. The helical transmembrane segment at 446–466 threads the bilayer; that stretch reads ISAASGKLGAIVGSFGFLYLA. Over 467 to 486 the chain is Extracellular; sequence QSPDRSKTEHGYPPGIGVRN. Residues 487–507 form a helical membrane-spanning segment; that stretch reads SLFLLAACNLLGLLFTFLVPE. Over 508–534 the chain is Cytoplasmic; it reads SKGKSLEEMSGDAEAQEEAPPPLQTVL. The disordered stretch occupies residues 514–534; it reads EEMSGDAEAQEEAPPPLQTVL.

The protein belongs to the major facilitator superfamily. Phosphate:H(+) symporter (TC 2.A.1.9) family. Highly expressed in leaves and at low levels in roots. Expressed in leaf xylem parenchyma cells.

The protein localises to the membrane. Functionally, high-affinity transporter for external inorganic phosphate (Pi). Probably involved in Pi uptake, translocation and internal transport throughout the plant. This Oryza sativa subsp. japonica (Rice) protein is Inorganic phosphate transporter 1-6 (PHT1-6).